Reading from the N-terminus, the 468-residue chain is Adenosylhomocysteinase (468 aa).

Substrate-binding residues include threonine 57, aspartate 132, and glutamate 194. 195-197 contacts NAD(+); sequence TTT. Residues lysine 224 and aspartate 228 each coordinate substrate. Residues asparagine 229, 258 to 263, glutamate 281, asparagine 316, 337 to 339, and asparagine 382 contribute to the NAD(+) site; these read GFGDVG and IGH.

It belongs to the adenosylhomocysteinase family. Requires NAD(+) as cofactor.

It is found in the cytoplasm. It catalyses the reaction S-adenosyl-L-homocysteine + H2O = L-homocysteine + adenosine. It functions in the pathway amino-acid biosynthesis; L-homocysteine biosynthesis; L-homocysteine from S-adenosyl-L-homocysteine: step 1/1. May play a key role in the regulation of the intracellular concentration of adenosylhomocysteine. The chain is Adenosylhomocysteinase from Methylobacterium sp. (strain 4-46).